We begin with the raw amino-acid sequence, 230 residues long: Orotidine 5'-phosphate decarboxylase (230 aa).

Residues aspartate 11, lysine 34, 61 to 70 (DLKLHDIPNT), threonine 117, arginine 179, glutamine 188, glycine 208, and arginine 209 each bind substrate. Lysine 63 (proton donor) is an active-site residue.

It belongs to the OMP decarboxylase family. Type 1 subfamily. In terms of assembly, homodimer.

It carries out the reaction orotidine 5'-phosphate + H(+) = UMP + CO2. It functions in the pathway pyrimidine metabolism; UMP biosynthesis via de novo pathway; UMP from orotate: step 2/2. Catalyzes the decarboxylation of orotidine 5'-monophosphate (OMP) to uridine 5'-monophosphate (UMP). This is Orotidine 5'-phosphate decarboxylase from Streptococcus pyogenes serotype M28 (strain MGAS6180).